The chain runs to 218 residues: Cytochrome b6 (218 aa).

The helical transmembrane segment at 35 to 55 (IFYCLGGITLVCFLIQFATGF) threads the bilayer. Cys-38 contacts heme c. Heme b contacts are provided by His-89 and His-103. 3 helical membrane-spanning segments follow: residues 93–113 (ASMM…TGGF), 119–139 (LTWV…VTGY), and 189–209 (LHTF…FLMI). 2 residues coordinate heme b: His-190 and His-205.

The protein belongs to the cytochrome b family. PetB subfamily. As to quaternary structure, the 4 large subunits of the cytochrome b6-f complex are cytochrome b6, subunit IV (17 kDa polypeptide, PetD), cytochrome f and the Rieske protein, while the 4 small subunits are PetG, PetL, PetM and PetN. The complex functions as a dimer. It depends on heme b as a cofactor. Requires heme c as cofactor.

Its subcellular location is the cellular thylakoid membrane. In terms of biological role, component of the cytochrome b6-f complex, which mediates electron transfer between photosystem II (PSII) and photosystem I (PSI), cyclic electron flow around PSI, and state transitions. This Synechococcus sp. (strain CC9605) protein is Cytochrome b6.